The following is a 170-amino-acid chain: MDLKQYVTIVPDFPKPGIMFKDITTLMDKGEVYKYATDQIVEYAREKKIDIVVGPEARGFIIGCPVAYALGVGFAPVRKEGKLPREVVRVEYGLEYGKDVLTMHKDAIKPGQRVLITDDLLATGGTIRATIQLVEQLGGVVAGIAFLIELTELEGRKKLEGYDILALMQF.

It belongs to the purine/pyrimidine phosphoribosyltransferase family. Homodimer.

The protein resides in the cytoplasm. It catalyses the reaction AMP + diphosphate = 5-phospho-alpha-D-ribose 1-diphosphate + adenine. It functions in the pathway purine metabolism; AMP biosynthesis via salvage pathway; AMP from adenine: step 1/1. Catalyzes a salvage reaction resulting in the formation of AMP, that is energically less costly than de novo synthesis. This is Adenine phosphoribosyltransferase from Geobacillus sp. (strain WCH70).